Consider the following 511-residue polypeptide: Cobyric acid synthase (511 aa).

The 193-residue stretch at 251 to 443 folds into the GATase cobBQ-type domain; it reads LLDIAIICLP…IHGIFDNDVF (193 aa). The active-site Nucleophile is C332. Residue H435 is part of the active site.

This sequence belongs to the CobB/CobQ family. CobQ subfamily.

Its pathway is cofactor biosynthesis; adenosylcobalamin biosynthesis. Its function is as follows. Catalyzes amidations at positions B, D, E, and G on adenosylcobyrinic A,C-diamide. NH(2) groups are provided by glutamine, and one molecule of ATP is hydrogenolyzed for each amidation. This is Cobyric acid synthase from Listeria monocytogenes serotype 4a (strain HCC23).